The chain runs to 101 residues: Small ribosomal subunit protein uS14 (101 aa).

Belongs to the universal ribosomal protein uS14 family. Part of the 30S ribosomal subunit. Contacts proteins S3 and S10.

Functionally, binds 16S rRNA, required for the assembly of 30S particles and may also be responsible for determining the conformation of the 16S rRNA at the A site. This is Small ribosomal subunit protein uS14 from Alkalilimnicola ehrlichii (strain ATCC BAA-1101 / DSM 17681 / MLHE-1).